A 245-amino-acid chain; its full sequence is 1-(5-phosphoribosyl)-5-[(5-phosphoribosylamino)methylideneamino] imidazole-4-carboxamide isomerase (245 aa).

Asp7 (proton acceptor) is an active-site residue. The active-site Proton donor is Asp129.

The protein belongs to the HisA/HisF family.

It is found in the cytoplasm. It carries out the reaction 1-(5-phospho-beta-D-ribosyl)-5-[(5-phospho-beta-D-ribosylamino)methylideneamino]imidazole-4-carboxamide = 5-[(5-phospho-1-deoxy-D-ribulos-1-ylimino)methylamino]-1-(5-phospho-beta-D-ribosyl)imidazole-4-carboxamide. It participates in amino-acid biosynthesis; L-histidine biosynthesis; L-histidine from 5-phospho-alpha-D-ribose 1-diphosphate: step 4/9. This chain is 1-(5-phosphoribosyl)-5-[(5-phosphoribosylamino)methylideneamino] imidazole-4-carboxamide isomerase, found in Shewanella putrefaciens (strain CN-32 / ATCC BAA-453).